A 218-amino-acid chain; its full sequence is Adenylate kinase (218 aa).

10–15 (GAGKGT) is a binding site for ATP. The NMP stretch occupies residues 30–59 (STGDMLRAAVKAGTPLGQQAKAVMDAGQLV). Residues T31, R36, 57-59 (QLV), 85-88 (GFPR), and Q92 each bind AMP. The segment at 122–159 (GRRSHPASGRTYHVKFNPPKVEGQDDVTGEPLVQREDD) is LID. ATP is bound by residues R123 and 132–133 (TY). The disordered stretch occupies residues 127-151 (PASGRTYHVKFNPPKVEGQDDVTGE). 2 residues coordinate AMP: R156 and R167. An ATP-binding site is contributed by G203.

It belongs to the adenylate kinase family. Monomer.

Its subcellular location is the cytoplasm. It catalyses the reaction AMP + ATP = 2 ADP. It participates in purine metabolism; AMP biosynthesis via salvage pathway; AMP from ADP: step 1/1. Functionally, catalyzes the reversible transfer of the terminal phosphate group between ATP and AMP. Plays an important role in cellular energy homeostasis and in adenine nucleotide metabolism. The polypeptide is Adenylate kinase (Delftia acidovorans (strain DSM 14801 / SPH-1)).